Here is a 302-residue protein sequence, read N- to C-terminus: Acetaldehyde dehydrogenase (302 aa).

The active-site Acyl-thioester intermediate is C131. NAD(+) contacts are provided by residues 162-170 and N273; that span reads SAGPGTRKN.

The protein belongs to the acetaldehyde dehydrogenase family.

The catalysed reaction is acetaldehyde + NAD(+) + CoA = acetyl-CoA + NADH + H(+). The protein is Acetaldehyde dehydrogenase of Acidovorax sp. (strain JS42).